The sequence spans 94 residues: Integration host factor subunit beta (94 aa).

It belongs to the bacterial histone-like protein family. Heterodimer of an alpha and a beta chain.

In terms of biological role, this protein is one of the two subunits of integration host factor, a specific DNA-binding protein that functions in genetic recombination as well as in transcriptional and translational control. The chain is Integration host factor subunit beta from Photorhabdus laumondii subsp. laumondii (strain DSM 15139 / CIP 105565 / TT01) (Photorhabdus luminescens subsp. laumondii).